The following is a 656-amino-acid chain: Methylenetetrahydrofolate reductase (NADPH) (656 aa).

Positions 1 to 46 (MVNEARGNDSLNPCLEGSASSSSESSKDSSRCSTPGLDPERHERLR) are disordered. S10, S18, S20, S21, S23, S25, S26, S29, and S30 each carry phosphoserine. At T34 the chain carries Phosphothreonine. The active-site Proton donor/acceptor is E63. NAD(+) is bound by residues 63–68 (EFFPPR) and 94–95 (TW). The residue at position 94 (T94) is a Phosphothreonine. 94–95 (TW) lines the FAD pocket. S103 is subject to Phosphoserine. Residues H127, 157–159 (RGD), 174–175 (YA), Y197, 201–204 (HPEA), D210, and K217 each bind FAD. D159 is a binding site for substrate. Substrate is bound by residues Q228, Y321, and R325. S394 is modified (phosphoserine). Phosphothreonine is present on T451. Residues N456, 461–464 (AAET), 481–485 (TINSQ), T560, and T573 each bind S-adenosyl-L-methionine.

This sequence belongs to the methylenetetrahydrofolate reductase family. Homodimer. The cofactor is FAD. In terms of processing, phosphorylation of an N-terminal serine-rich phosphorylation region increases sensitivity to S-adenosylmethionine and inhibition.

It catalyses the reaction (6S)-5-methyl-5,6,7,8-tetrahydrofolate + NADP(+) = (6R)-5,10-methylene-5,6,7,8-tetrahydrofolate + NADPH + H(+). It functions in the pathway one-carbon metabolism; tetrahydrofolate interconversion. With respect to regulation, allosterically regulated by S-adenosylmethionine (SAM). Functionally, catalyzes the conversion of 5,10-methylenetetrahydrofolate to 5-methyltetrahydrofolate, a cosubstrate for homocysteine remethylation to methionine. Represents a key regulatory connection between the folate and methionine cycles. The protein is Methylenetetrahydrofolate reductase (NADPH) (MTHFR) of Macaca fascicularis (Crab-eating macaque).